The sequence spans 417 residues: Peptide chain release factor subunit 1 (417 aa).

This sequence belongs to the eukaryotic release factor 1 family. In terms of assembly, heterodimer of two subunits, one of which binds GTP.

It is found in the cytoplasm. Its function is as follows. Directs the termination of nascent peptide synthesis (translation) in response to the termination codons UAA, UAG and UGA. This chain is Peptide chain release factor subunit 1 (prf1), found in Thermoplasma acidophilum (strain ATCC 25905 / DSM 1728 / JCM 9062 / NBRC 15155 / AMRC-C165).